A 178-amino-acid polypeptide reads, in one-letter code: Prion-like protein doppel (178 aa).

The N-terminal stretch at 1–25 (MRKHLGGCWLAIVCVLLFSQLSSVK) is a signal peptide. Residues 27-50 (RGIKHRIKWNRKVLPSTSQVTEAH) form a flexible tail region. Residues 51–154 (TAEIRPGAFI…KHCDFWLERG (104 aa)) are globular. 2 disulfides stabilise this stretch: cysteine 94–cysteine 147 and cysteine 108–cysteine 142. Residues asparagine 98 and asparagine 110 are each glycosylated (N-linked (GlcNAc...) asparagine). The tract at residues 124–141 (KQDNKLYQRVLWQLIREL) is cu(2+) binding. A lipid anchor (GPI-anchor amidated glycine) is attached at glycine 154. A propeptide spans 155–178 (AGLQVTLDQPMMLCLLVFIWFIVK) (removed in mature form).

The protein belongs to the prion family. In terms of processing, N-glycosylated. O-glycosylated. As to expression, strongly expressed in testis. Detected at low levels in lymph node, spleen and ovary.

It localises to the cell membrane. Functionally, required for normal acrosome reaction and for normal male fertility. Can bind Cu(2+). This chain is Prion-like protein doppel (PRND), found in Ovis aries (Sheep).